Reading from the N-terminus, the 133-residue chain is Ribosome-binding factor A (133 aa).

Belongs to the RbfA family. As to quaternary structure, monomer. Binds 30S ribosomal subunits, but not 50S ribosomal subunits or 70S ribosomes.

Its subcellular location is the cytoplasm. Its function is as follows. One of several proteins that assist in the late maturation steps of the functional core of the 30S ribosomal subunit. Associates with free 30S ribosomal subunits (but not with 30S subunits that are part of 70S ribosomes or polysomes). Required for efficient processing of 16S rRNA. May interact with the 5'-terminal helix region of 16S rRNA. The sequence is that of Ribosome-binding factor A from Salmonella typhi.